A 437-amino-acid chain; its full sequence is Ribosomal protein uS12 methylthiotransferase RimO (437 aa).

An MTTase N-terminal domain is found at 9 to 128 (NKINVITLGC…LLKALGADYK (120 aa)). [4Fe-4S] cluster contacts are provided by Cys-18, Cys-57, Cys-91, Cys-152, Cys-156, and Cys-159. Residues 138 to 368 (TTPKNYAYLK…MELQSQISWD (231 aa)) form the Radical SAM core domain. Residues 371–437 (QEKVGQVFRC…TEFDLYGEPA (67 aa)) enclose the TRAM domain.

The protein belongs to the methylthiotransferase family. RimO subfamily. [4Fe-4S] cluster is required as a cofactor.

The protein resides in the cytoplasm. It carries out the reaction L-aspartate(89)-[ribosomal protein uS12]-hydrogen + (sulfur carrier)-SH + AH2 + 2 S-adenosyl-L-methionine = 3-methylsulfanyl-L-aspartate(89)-[ribosomal protein uS12]-hydrogen + (sulfur carrier)-H + 5'-deoxyadenosine + L-methionine + A + S-adenosyl-L-homocysteine + 2 H(+). In terms of biological role, catalyzes the methylthiolation of an aspartic acid residue of ribosomal protein uS12. The protein is Ribosomal protein uS12 methylthiotransferase RimO of Flavobacterium johnsoniae (strain ATCC 17061 / DSM 2064 / JCM 8514 / BCRC 14874 / CCUG 350202 / NBRC 14942 / NCIMB 11054 / UW101) (Cytophaga johnsonae).